A 1720-amino-acid chain; its full sequence is MKGSTLREGTAMASPLPQDMEEELAPVGSEPGDPRAKPPVKPKPRGLPSKPALPAKPSLLVPVGPRPPRGPLAELPSARKMNMLAGPQPYGVSKRPLPFAPRPSAEATAGGDVTQESGKEDAGKEDLPPLTPPARCAALGGVRKAPAPFRPSSERFAACTVEEILAKMEQPRKEILASPDRLWGSRLTFNHDGSSRYGPRTYGAPCPREEDSKSPAKGRSQEGTAEIPAECQEEHSKTPEERNLTSSPAMNGDLAKLACSEAPTDVSKTWVTSSADPVSEHGGSTSAVRLANISVPASESPRLSSRPSSPCHSQLSETQSPAASEASSICLPVTPASPSAVLPAEPPGHSPSSELPAEAAPETLSPNSSPVETVSGHHSPEQPPVLLPQLLTEGAELPDITRTFPCGEEAAARGHTESRPSSLAQRRFSEGVLQPPSQDQEKLGGSLATLPQGQGSQSALDRPFGSGTESNWSLSQSFEWTFPTRPSGLGVWRLDSPPPSPITEASEAAEAAEADSWAVSGRGEGVSQVGPGTPPAPESPRKPISGVQGNDPGISLPQRDDGESQPRSPALLPSTVEGPPGAPLLQAKENYEDQEPLVGHESPITLAAREAALPVLEPALGQQQPTPSDQPCILFVDVPDPEQALSTEEDVVTLGWAETTLPMTEAQEPCSVSPEPTGPESSSRWLDDLLASPPPNSGSARRAAGAELKDRQSPSTCSEGLLGWAQKDLQSEFGVATDSHHSSFGSSSWSQDTSQNYSLGGRSPVGDTGLGKRDWSSKCGQGSGEGSTREWASRHSLGQEVIGIGGSQDESEVPVRERAVGRPAQLGAQGLEADAQQWEFGKRESQDPHSIHDKELQDQEFGKRDSLGSFSTRDASLQDWEFGKRASVSTNQDTDENDQELGMKNLSRGYSSQDAEEQDREFEKRDSVLDIHGSRATAQQNQEFGKSAWFQDYSSGGGGSRVLGSQERGFGIRSLSSGFSPEEAQQQDEEFEKKTPVGEDRFCEASRDVGHLEEGASGGLLSPSTPHSRDGAARPKDEGSWQDGDSSQEITRLQGRMQAESQSPTNVDLEDKEREQRGWAGEFSLGVAAQSEAAFSPGRQDWSRDVCVEASESSYQFGIIGNDRVSGAGLSPSRKSGGGHFVPPGETKAGAVDWTDQLGLRNLEVSSCVSSEGPSEARENVVGQMGWSDSLGLNNGDLARRLGTGESEEPRSLGVGEKDWTSSVEARNRDLPGQAEVGRHSQARESGVGEPDWSGAEAGEFLKSRERGVGQADWTPDLGLRNMAPGAGCSPGEPRELGVGQVDWGDDLGLRNLEVSCDLESGGSRGCGVGQMDWAQDLGLRNLRLCGAPSEVRECGVGRVGPDLELDPKSSGSLSPGLETEDPLEARELGVGEISGPETQGEDSSSPSFETPSEDTGMDTGEAPSLGASPSSCLTRSPPSGSQSLLEGIMTASSSKGAPQRESAASGSRVLLEEEGLAAGAGQGEPQEPSRAPLPSSRPQPDGEASQVEEVDGTWSLTGAARQNEQASAPPPRRPPRGLLPSCPSEDFSFIEDTEILDSAMYRSRANLGRKRGHRAPAIRPGGTLGLSETADSDTRLFQDSTEPRASRVPSSDEEVVEEPQSRRTRMSLGTKGLKVNLFPGLSPSALKAKLRSRNRSAEEGEVTESKSSQKESSVQRSKSCKVPGLGKPLTLPPKPEKSSGSEGSSPNWLQALKLKKKKI.

Residues Met-1–Ala-137 are disordered. At Ser-14 the chain carries Phosphoserine. Residues Ser-117–Leu-127 show a composition bias toward basic and acidic residues. Thr-131 carries the phosphothreonine modification. Residues Ser-178 and Ser-220 each carry the phosphoserine modification. 2 disordered regions span residues Ser-185 to Trp-472 and Arg-485 to Glu-595. The interval Glu-209–Arg-1563 is acidic. The segment covering Gln-232–Asn-243 has biased composition (basic and acidic residues). Thr-238 is subject to Phosphothreonine. Residues Val-266–Ala-287 show a composition bias toward polar residues. Residues Ser-286 and Ser-300 each carry the phosphoserine modification. Residues Pro-296 to Ser-316 are compositionally biased toward low complexity. Over residues Glu-317–Ser-327 the composition is skewed to polar residues. 2 positions are modified to phosphoserine: Ser-429 and Ser-437. Positions Thr-449–Ala-459 are enriched in polar residues. A phosphoserine mark is found at Ser-496 and Ser-500. The segment covering Ile-502 to Ala-518 has biased composition (low complexity). 2 positions are modified to phosphothreonine: Thr-503 and Thr-533. A phosphoserine mark is found at Ser-539, Ser-568, Ser-602, Ser-673, Ser-692, and Ser-713. Disordered regions lie at residues Thr-659–Gly-720, Gly-734–Lys-924, and Ser-955–Gly-1081. The span at Ser-742–Ser-758 shows a compositional bias: low complexity. Phosphoserine occurs at positions 763, 796, 807, 845, 866, 871, 876, 887, 912, 976, 980, 1006, 1017, and 1022. Over residues Phe-840–Ser-866 the composition is skewed to basic and acidic residues. Positions Phe-991–Glu-1014 are enriched in basic and acidic residues. Residues His-1027 to Gly-1039 show a composition bias toward basic and acidic residues. Phosphoserine is present on residues Ser-1047, Ser-1063, Ser-1084, Ser-1096, Ser-1126, Ser-1131, Ser-1171, Ser-1212, Ser-1241, and Ser-1246. Positions Ala-1128–Asp-1153 are disordered. The segment at Leu-1198–Gly-1255 is disordered. Positions Glu-1208–Asp-1230 are enriched in basic and acidic residues. Position 1275 is a phosphothreonine (Thr-1275). 5 positions are modified to phosphoserine: Ser-1290, Ser-1321, Ser-1324, Ser-1373, and Ser-1375. Positions Gly-1358–Glu-1546 are disordered. Residues Glu-1402 to Thr-1411 show a composition bias toward polar residues. Phosphoserine is present on residues Ser-1425, Ser-1429, Ser-1437, Ser-1440, Ser-1442, Ser-1463, and Ser-1466. The segment covering Ala-1428 to Gly-1457 has biased composition (polar residues). Residues Ser-1440–Pro-1532 are tankyrase-binding. Residues Leu-1477–Pro-1489 show a composition bias toward low complexity. Ser-1496 is modified (phosphoserine). The segment covering Trp-1515–Ala-1527 has biased composition (polar residues). Residue Ser-1549 is modified to Phosphoserine. The residue at position 1554 (Thr-1554) is a Phosphothreonine. The tract at residues Asn-1567–Ile-1720 is disordered. Residues Leu-1568–Pro-1577 are compositionally biased toward basic residues. Basic and acidic residues predominate over residues Ser-1593–Ala-1606. Phosphoserine is present on residues Ser-1611, Ser-1612, and Ser-1622. The Nuclear localization signal motif lies at Pro-1620–Arg-1626. At Lys-1635 the chain carries N6-methyllysine. Residues Ser-1643 and Ser-1657 each carry the phosphoserine modification. Over residues Arg-1656–Gln-1670 the composition is skewed to basic and acidic residues. The segment covering Lys-1671 to Leu-1690 has biased composition (low complexity). Ser-1706 is subject to Phosphoserine. The Nuclear localization signal motif lies at Lys-1714 to Lys-1719.

Binds to the ANK repeat domain of TNKS1 and TNKS2. Post-translationally, ADP-ribosylated by TNKS1.

Its subcellular location is the nucleus. The protein localises to the cytoplasm. The protein resides in the cytoskeleton. It is found in the chromosome. This chain is 182 kDa tankyrase-1-binding protein (Tnks1bp1), found in Mus musculus (Mouse).